The sequence spans 305 residues: Olfactory receptor 4F4 (305 aa).

Residues 1 to 18 lie on the Extracellular side of the membrane; sequence MVTEFIFLGLSDSQELQT. The chain crosses the membrane as a helical span at residues 19–42; sequence FLFMLFFVFYGGIVFGNLLIVITV. The Cytoplasmic segment spans residues 43–50; that stretch reads VSDSHLHS. The helical transmembrane segment at 51-72 threads the bilayer; sequence PMYFLLANLSLIDLSLSSVTAP. Over 73–93 the chain is Extracellular; it reads KMITDFFSQRKVISFKGCLVQ. A disulfide bond links C90 and C182. A helical transmembrane segment spans residues 94 to 113; the sequence is IFLLHFFGGSEMVILIAMGF. Residues 114-132 are Cytoplasmic-facing; that stretch reads DRYIAICKPLHYTTIMCGN. A helical transmembrane segment spans residues 133 to 151; sequence ACVGIMAVAWGIGFLHSVS. The Extracellular portion of the chain corresponds to 152 to 188; it reads QLAFAVHLPFCGPNEVDSFYCDLPRVIKLACTDTYRL. A helical transmembrane segment spans residues 189–212; sequence DIMVIANSGVLTVCSFVLLIISYT. The Cytoplasmic segment spans residues 213-228; sequence IILMTIQHCPLDKSSK. The chain crosses the membrane as a helical span at residues 229-251; it reads ALSTLTAHITVVLLFFGPCVFIY. The Extracellular portion of the chain corresponds to 252–262; the sequence is AWPFPIKSLDK. The chain crosses the membrane as a helical span at residues 263–282; it reads FLAVFYSVITPLLNPIIYTL. Over 283–305 the chain is Cytoplasmic; the sequence is RNKDMKTAIRRLRKWDAHSSVKF.

Belongs to the G-protein coupled receptor 1 family.

The protein localises to the cell membrane. Its function is as follows. Odorant receptor. This chain is Olfactory receptor 4F4 (OR4F4), found in Homo sapiens (Human).